Here is a 525-residue protein sequence, read N- to C-terminus: MKCKKPSALFSALALVGALGAASVLGAASANSASPVAAATVQASSGSAKTSVAATSKSQDGDVLAAIVRDLKITKTQAKKRIKLEEKARQLEPRLQKKLGKKFAGLWISKNGKKIVVGVTTKKAAKVVKKAGATPKIVKSNLTTLKKRATKISKNAPSDIKNVNSWWVDPATNKVVIEARSKKAAKAAATAAGLTAGTYEITVSDDVIVPVRDYWGGDALSGCTLAFPVYGGFLTAGHCAVEGKGHILKTEMTGGQIGTVEASQFGDGIDAAWAKNYGDWNGRGRVTHWNGGGGVDIKGSNEAAVGAHMCKSGRTTKWTCGYLLRKDVSVNYGNGHIVTLNETSACALGGDSGGAYVWNDQAQGITSGSNMDTNNCRSFYQPVNTVLNKWKLSLVTSTDVTTSYVQGYQNNCIDVPNSDFTDGKQLQVWNCNGTNAQKVSFHPDGTLRINGKCLDARWAWTHNGTEVQLMNCNGHIAQKFTLNGAGDLVNVHANKCVDVKDWGGQGGKLQLWECSGGANQKWWRR.

Positions 1 to 32 (MKCKKPSALFSALALVGALGAASVLGAASANS) are cleaved as a signal peptide. Residues 33–211 (ASPVAAATVQ…TVSDDVIVPV (179 aa)) constitute a propeptide that is removed on maturation. A disulfide bridge connects residues cysteine 223 and cysteine 239. Residues histidine 238 and aspartate 270 each act as charge relay system in the active site. Disulfide bonds link cysteine 310–cysteine 320, cysteine 346–cysteine 376, cysteine 412–cysteine 431, cysteine 453–cysteine 472, and cysteine 496–cysteine 514. Catalysis depends on serine 352, which acts as the Charge relay system. The region spanning 396–525 (TSTDVTTSYV…GGANQKWWRR (130 aa)) is the Ricin B-type lectin domain. The segment at 401–525 (TTSYVQGYQN…GGANQKWWRR (125 aa)) is essential for the lytic activity, but not for protease function.

It belongs to the peptidase S1 family.

The protein resides in the secreted. Major serine protease exhibiting lytic activity toward living yeast cells. Similar to elastase in its substrate specificity and has a lectin-like affinity for mannose. Mannoproteins may be the native substrate for RPI. The protein is Serine protease 1 of Rarobacter faecitabidus.